The following is a 137-amino-acid chain: Proofreading thioesterase EntH (137 aa).

Glu63 serves as the catalytic Nucleophile or proton acceptor.

The protein belongs to the thioesterase PaaI family. As to quaternary structure, homotetramer. Dimer of dimers. Interacts specifically with the aryl carrier protein (ArCP) domain of EntB.

Its subcellular location is the cytoplasm. It functions in the pathway siderophore biosynthesis; enterobactin biosynthesis. Required for optimal enterobactin synthesis. Acts as a proofreading enzyme that prevents EntB misacylation by hydrolyzing the thioester bound existing between EntB and wrongly charged molecules. This chain is Proofreading thioesterase EntH, found in Cronobacter turicensis (strain DSM 18703 / CCUG 55852 / LMG 23827 / z3032).